The chain runs to 218 residues: UPF0711 protein C18orf21 homolog (218 aa).

Phosphoserine is present on Ser-126. Over residues 130–146 (ASAASKASPKTPKRAAA) the composition is skewed to low complexity. The segment at 130 to 192 (ASAASKASPK…NGSKRKKHFS (63 aa)) is disordered. Thr-140 bears the Phosphothreonine mark. The span at 147 to 156 (GSTNISQSVH) shows a compositional bias: polar residues. Residues 161 to 172 (RSPSSTVRTPTS) are compositionally biased toward low complexity. Over residues 173 to 183 (GQSTPICSSRN) the composition is skewed to polar residues.

It belongs to the UPF0711 family.

This Rattus norvegicus (Rat) protein is UPF0711 protein C18orf21 homolog.